The chain runs to 228 residues: uncharacterized protein (228 aa).

Residues 1–34 (MPRDTKPYSRPANAPRPGVKTERSNQFKAASTKY) are disordered.

This is an uncharacterized protein from Orgyia pseudotsugata (Douglas-fir tussock moth).